The chain runs to 465 residues: Glutamate--tRNA ligase (465 aa).

The 'HIGH' region signature appears at 8 to 18; that stretch reads PSPTGDLHIGG. Positions 235 to 239 match the 'KMSKS' region motif; that stretch reads RLSKR. Lysine 238 is an ATP binding site.

It belongs to the class-I aminoacyl-tRNA synthetase family. Glutamate--tRNA ligase type 1 subfamily. In terms of assembly, monomer.

It is found in the cytoplasm. It catalyses the reaction tRNA(Glu) + L-glutamate + ATP = L-glutamyl-tRNA(Glu) + AMP + diphosphate. In terms of biological role, catalyzes the attachment of glutamate to tRNA(Glu) in a two-step reaction: glutamate is first activated by ATP to form Glu-AMP and then transferred to the acceptor end of tRNA(Glu). The polypeptide is Glutamate--tRNA ligase (Dichelobacter nodosus (strain VCS1703A)).